We begin with the raw amino-acid sequence, 451 residues long: Protein SAR DEFICIENT 1 (451 aa).

The DNA-binding stretch occupies residues 149–270; it reads DKWTSDEFES…AFHKKLSSRH (122 aa).

It belongs to the plant ACBP60 protein family. In terms of assembly, (Microbial infection) Interacts with V.dahliae SCP41.

Its subcellular location is the nucleus. In terms of biological role, transcription activator that binds DNA in a sequence-specific manner, 5'-GAAATTTTGG-3', to promote the expression of target genes. Recruited to the promoter of ICS1 and other defense-related genes (e.g. PR1 and SID2) in response to both biotic (e.g. Pseudomonas syringae pv. maculicola ES4326) and abiotic stresses (e.g. UV-B), thus triggering slow defense responses by stimulating salicylic acid (SA) biosynthesis. Required for basal and systemic acquired resistance to P.syringae pv. maculicola and Hyaloperonospora arabidopsidis. This chain is Protein SAR DEFICIENT 1, found in Arabidopsis thaliana (Mouse-ear cress).